Reading from the N-terminus, the 709-residue chain is Probable lanosterol 14-alpha demethylase (709 aa).

Residue C425 participates in heme binding.

Belongs to the cytochrome P450 family. The cofactor is heme.

It localises to the membrane. It carries out the reaction a 14alpha-methyl steroid + 3 reduced [NADPH--hemoprotein reductase] + 3 O2 = a Delta(14) steroid + formate + 3 oxidized [NADPH--hemoprotein reductase] + 4 H2O + 4 H(+). It participates in steroid biosynthesis; zymosterol biosynthesis; zymosterol from lanosterol: step 1/6. Catalyzes the 14-alpha demethylation of obtusifoliol to 4 alpha-methyl-5 alpha-ergosta-8,14,24(28)-trien-3 beta-ol. The chain is Probable lanosterol 14-alpha demethylase from Acanthamoeba polyphaga (Amoeba).